Here is a 159-residue protein sequence, read N- to C-terminus: Ribosomal RNA large subunit methyltransferase H (159 aa).

S-adenosyl-L-methionine is bound by residues L76, G108, and 127-132; that span reads FGRLTL.

It belongs to the RNA methyltransferase RlmH family. In terms of assembly, homodimer.

It localises to the cytoplasm. It carries out the reaction pseudouridine(1915) in 23S rRNA + S-adenosyl-L-methionine = N(3)-methylpseudouridine(1915) in 23S rRNA + S-adenosyl-L-homocysteine + H(+). Functionally, specifically methylates the pseudouridine at position 1915 (m3Psi1915) in 23S rRNA. This chain is Ribosomal RNA large subunit methyltransferase H, found in Listeria monocytogenes serotype 4b (strain CLIP80459).